Reading from the N-terminus, the 2678-residue chain is Mediator of RNA polymerase II transcription subunit 13 (2678 aa).

Disordered stretches follow at residues 1–52 (MMGT…GYNS), 140–285 (SKKP…QPIS), 495–524 (NSNNIINNNNNSNINNNINNNNNQQQQQQQ), 553–615 (QQQQ…NNNI), 852–993 (SPSS…QQQQ), 1070–1253 (TSHY…KPFL), 1278–1394 (LPHN…QDES), 1462–1502 (SPFS…NNHH), 1806–1838 (FSGSSGLNNSNDRNSMIPMDNSDDTSDLMSMDD), 2075–2105 (QNQNQNQNSNSNESQQQQQQQSNNKQKQTQT), 2225–2307 (SSSS…QEQK), and 2656–2678 (KLTPNSKQSPSPINSPHLNSNNT). 3 stretches are compositionally biased toward low complexity: residues 15 to 48 (SGSNAGGNVNNNNNGPNINNPNNPNNTNSLPTTS), 144 to 162 (INNSSNNSNITSSTSTDSS), and 169 to 186 (NSPSETTPPNTTNNNSNN). Over residues 187–206 (VTKDSPPNATNKMSTSPKSL) the composition is skewed to polar residues. Low complexity predominate over residues 207-276 (SPTISNNNNN…SPPTVASVTS (70 aa)). Low complexity-rich tracts occupy residues 553-573 (QQQQTINNNSNNISSNNDNNN) and 587-615 (SSSSSSTPSQVTMQTTPTQEFSNNNNNNI). Polar residues predominate over residues 855–872 (SPLTQHPSSPHSPFNNVN). Positions 901 to 916 (KKRHGKSQKKGRSSKR) are enriched in basic residues. Residues 922 to 950 (SNNNNNNNTTTTSTITATTTTTTPTAATT) are compositionally biased toward low complexity. Polar residues-rich tracts occupy residues 966 to 979 (NIQETSQPQSLTTV) and 1079 to 1090 (PTQNGSQKNNQR). Over residues 1109-1150 (TTTTTTTTTTTPTPNPTTTTTQPQTQPQQQSQQQQQPQQTNP) the composition is skewed to low complexity. Over residues 1151–1195 (ILPTNSNLITNQKPQQYQPPLQDPFQSIDSQQPKSIQSPTLTNQP) the composition is skewed to polar residues. The span at 1201 to 1211 (PTLTNQPLQQY) shows a compositional bias: low complexity. The span at 1281 to 1306 (NTEQSPSNDDLSNPNHLHHGTPTSAI) shows a compositional bias: polar residues. Low complexity predominate over residues 1312–1321 (SSSSSGNNMI). The segment covering 1322–1343 (GSGGIVGSGGGNTNVSGSGGGM) has biased composition (gly residues). A compositionally biased stretch (basic residues) spans 1359–1371 (PHHHHHHHHHHHP). Low complexity predominate over residues 1475–1497 (TTTNNNNNHNNNNNNNHPNNHHQ). A compositionally biased stretch (polar residues) spans 1806 to 1819 (FSGSSGLNNSNDRN). A compositionally biased stretch (polar residues) spans 2658-2678 (TPNSKQSPSPINSPHLNSNNT).

This sequence belongs to the Mediator complex subunit 13 family. In terms of assembly, component of the Mediator complex.

The protein localises to the nucleus. Component of the Mediator complex, a coactivator involved in the regulated transcription of nearly all RNA polymerase II-dependent genes. Mediator functions as a bridge to convey information from gene-specific regulatory proteins to the basal RNA polymerase II transcription machinery. Mediator is recruited to promoters by direct interactions with regulatory proteins and serves as a scaffold for the assembly of a functional preinitiation complex with RNA polymerase II and the general transcription factors. Required for the starvation-induced activation of the ACA (adenylyl cyclase) expression pathway at the growth/differentiation transition. The sequence is that of Mediator of RNA polymerase II transcription subunit 13 (amiB) from Dictyostelium discoideum (Social amoeba).